A 144-amino-acid polypeptide reads, in one-letter code: Ribonuclease VapC1 (144 aa).

In terms of domain architecture, PINc spans 6 to 132; it reads VFVDGNVIVD…SFYSPDIEVL (127 aa). Mg(2+)-binding residues include D9 and D102.

It belongs to the PINc/VapC protein family. It depends on Mg(2+) as a cofactor.

Toxic component of a type II toxin-antitoxin (TA) system. An RNase. The sequence is that of Ribonuclease VapC1 from Aquifex aeolicus (strain VF5).